Consider the following 503-residue polypeptide: Probable cytosol aminopeptidase (503 aa).

Mn(2+) is bound by residues Lys268 and Asp273. Residue Lys280 is part of the active site. Residues Asp291, Asp350, and Glu352 each coordinate Mn(2+). Arg354 is an active-site residue.

Belongs to the peptidase M17 family. Mn(2+) serves as cofactor.

It is found in the cytoplasm. It catalyses the reaction Release of an N-terminal amino acid, Xaa-|-Yaa-, in which Xaa is preferably Leu, but may be other amino acids including Pro although not Arg or Lys, and Yaa may be Pro. Amino acid amides and methyl esters are also readily hydrolyzed, but rates on arylamides are exceedingly low.. The enzyme catalyses Release of an N-terminal amino acid, preferentially leucine, but not glutamic or aspartic acids.. In terms of biological role, presumably involved in the processing and regular turnover of intracellular proteins. Catalyzes the removal of unsubstituted N-terminal amino acids from various peptides. This Nocardia farcinica (strain IFM 10152) protein is Probable cytosol aminopeptidase.